The primary structure comprises 948 residues: FRIGIDA-like protein 5 (948 aa).

A coiled-coil region spans residues 47–164 (DSTRSVLEER…VEKHRERIVA (118 aa)). Disordered regions lie at residues 447-500 (ESAQ…APSQ), 518-538 (VKESGADHQPDTIATHPSGTE), and 804-894 (RNTS…YPSH). 2 stretches are compositionally biased toward basic and acidic residues: residues 459-475 (SYEKRQSTTKGVEKSEA) and 518-527 (VKESGADHQP). The segment covering 807 to 817 (SNGSGSGSASS) has biased composition (low complexity). Positions 818-830 (KPDSTIKQSQTAK) are enriched in polar residues. A compositionally biased stretch (basic residues) spans 861–872 (FSKKNKRGKKRS). Residues 873 to 894 (MSGNNQSSGHIASHTSNHYPSH) show a composition bias toward polar residues.

The protein belongs to the Frigida family. As to expression, expressed at low levels during seed development.

In Arabidopsis thaliana (Mouse-ear cress), this protein is FRIGIDA-like protein 5 (FRL5).